The chain runs to 271 residues: Urease accessory protein UreD (271 aa).

It belongs to the UreD family. In terms of assembly, ureD, UreF and UreG form a complex that acts as a GTP-hydrolysis-dependent molecular chaperone, activating the urease apoprotein by helping to assemble the nickel containing metallocenter of UreC. The UreE protein probably delivers the nickel.

It localises to the cytoplasm. Required for maturation of urease via the functional incorporation of the urease nickel metallocenter. This Halalkalibacterium halodurans (strain ATCC BAA-125 / DSM 18197 / FERM 7344 / JCM 9153 / C-125) (Bacillus halodurans) protein is Urease accessory protein UreD.